An 892-amino-acid chain; its full sequence is Zinc finger protein 512B (892 aa).

Residues 1-82 (MTDPFCVGGR…KKGRPKAENQ (82 aa)) form a disordered region. The span at 8–19 (GGRRLPGSSKSG) shows a compositional bias: low complexity. A C2H2-type 1; atypical zinc finger spans residues 105–129 (VKCPNSGCWLEFPSIYGLKYHYQRC). The C2H2-type 2 zinc-finger motif lies at 140-163 (FPCPFCEAAFTSKTQLEKHRIWNH). Disordered regions lie at residues 323–473 (MVLL…RKKV) and 562–582 (EHSA…EERE). The span at 371 to 384 (SMGQSSAFQLSADT) shows a compositional bias: polar residues. The segment covering 385–398 (SSGSLSPGSRPSGG) has biased composition (low complexity). Position 409 is a phosphoserine (Ser409). A compositionally biased stretch (basic residues) spans 418–428 (TKHRRKQKTPK). The short motif at 421-427 (RRKQKTP) is the NuRD interaction motif element. The C2H2-type 3 zinc finger occupies 540-563 (LKCQHCRKQFKSKAGLNYHTMAEH). The segment at 594 to 618 (LRCPQEGCGAAFSSLMGYQYHQRRC) adopts a C2H2-type 4; atypical zinc-finger fold. A C2H2-type 5 zinc finger spans residues 630–653 (FPCTHCGKTYRSKAGHDYHVRSEH). The disordered stretch occupies residues 649–682 (VRSEHTAPPPEEPTDKSPEAEDPLGVERTPSGRV). Phosphoserine is present on Ser686. The segment at 750-774 (VNCPNDCCEAIYSSVSGLKAHLASC) adopts a C2H2-type 6; atypical zinc-finger fold. A C2H2-type 7 zinc finger spans residues 784 to 807 (YRCLLCPKEFSSESGVKYHILKTH). Positions 812–892 (FRTSADPPPK…KVGVSKAPEK (81 aa)) are disordered. The segment covering 819–831 (PPKHRSQDSLVPK) has biased composition (basic and acidic residues). Residues 832 to 849 (KEKKKNLAGGKKRGRKPK) are compositionally biased toward basic residues. Basic and acidic residues predominate over residues 850-876 (ERTPEEPVAKLPPRRDDWPPGCRDKGA).

This sequence belongs to the krueppel C2H2-type zinc-finger protein family. As to quaternary structure, interacts (via its NuRD interaction motif) with RBBP4 of the nucleosome remodeling and deacetylase (NuRD) complex; the interaction is direct and may play a role in repressing gene expression.

It is found in the nucleus. Involved in transcriptional regulation by repressing gene expression. Associates with the nucleosome remodeling and histone deacetylase (NuRD) complex, which promotes transcriptional repression by histone deacetylation and nucleosome remodeling. This Homo sapiens (Human) protein is Zinc finger protein 512B (ZNF512B).